The sequence spans 285 residues: Polyamine aminopropyltransferase (285 aa).

The region spanning 5–241 (DNWYIEHFQP…GWWSVTMASK (237 aa)) is the PABS domain. S-methyl-5'-thioadenosine is bound at residue Q35. 2 residues coordinate spermidine: H66 and D90. Residues D110 and 141–142 (DG) contribute to the S-methyl-5'-thioadenosine site. Catalysis depends on D160, which acts as the Proton acceptor. Position 160–163 (160–163 (DSTD)) interacts with spermidine. P167 is an S-methyl-5'-thioadenosine binding site.

This sequence belongs to the spermidine/spermine synthase family. As to quaternary structure, homodimer or homotetramer.

Its subcellular location is the cytoplasm. It carries out the reaction S-adenosyl 3-(methylsulfanyl)propylamine + putrescine = S-methyl-5'-thioadenosine + spermidine + H(+). It participates in amine and polyamine biosynthesis; spermidine biosynthesis; spermidine from putrescine: step 1/1. Functionally, catalyzes the irreversible transfer of a propylamine group from the amino donor S-adenosylmethioninamine (decarboxy-AdoMet) to putrescine (1,4-diaminobutane) to yield spermidine. The polypeptide is Polyamine aminopropyltransferase (Xanthomonas oryzae pv. oryzae (strain MAFF 311018)).